The primary structure comprises 204 residues: Small ribosomal subunit protein uS7 (204 aa).

It belongs to the universal ribosomal protein uS7 family. As to quaternary structure, part of the 30S ribosomal subunit.

Its function is as follows. One of the primary rRNA binding proteins, it binds directly to 16S rRNA where it nucleates assembly of the head domain of the 30S subunit. Is located at the subunit interface close to the decoding center. The sequence is that of Small ribosomal subunit protein uS7 from Methanoregula boonei (strain DSM 21154 / JCM 14090 / 6A8).